Consider the following 288-residue polypeptide: Quinate/shikimate dehydrogenase (288 aa).

K71 and D107 together coordinate substrate. Residues 132-135 (AGGA), 155-158 (NRRD), K205, 232-235 (CVYN), and G255 contribute to the NAD(+) site.

This sequence belongs to the shikimate dehydrogenase family. As to quaternary structure, homodimer.

The catalysed reaction is L-quinate + NAD(+) = 3-dehydroquinate + NADH + H(+). It carries out the reaction L-quinate + NADP(+) = 3-dehydroquinate + NADPH + H(+). The enzyme catalyses shikimate + NADP(+) = 3-dehydroshikimate + NADPH + H(+). It catalyses the reaction shikimate + NAD(+) = 3-dehydroshikimate + NADH + H(+). Its pathway is metabolic intermediate biosynthesis; chorismate biosynthesis; chorismate from D-erythrose 4-phosphate and phosphoenolpyruvate: step 4/7. Functionally, the actual biological function of YdiB remains unclear, nor is it known whether 3-dehydroshikimate or quinate represents the natural substrate. Catalyzes the reversible NAD-dependent reduction of both 3-dehydroshikimate (DHSA) and 3-dehydroquinate to yield shikimate (SA) and quinate, respectively. It can use both NAD or NADP for catalysis, however it has higher catalytic efficiency with NAD. The sequence is that of Quinate/shikimate dehydrogenase from Shigella sonnei (strain Ss046).